We begin with the raw amino-acid sequence, 309 residues long: MITFLPIIFSILIVVTFVIGNFANGFIALANSIEWFKRQKISFADQILTALAVSRVGLLWVLLLNWYATELNPAFYSIEVRITAYNLWAVINHFSNWLATSLSIFYLLKIANFSNLIFLCLKRRVKSVVLVILLGPLLFLVCHLFVINMNQIIWTKEYEGNMTWKIKLRSAMYLSNTTVTILANLVPFTLTLISFLLLICSLCKHLEKMQLHGKGSQDPSMKVHIKALQTVTSFLLLCAIYFLSIIMSVWSFESLENKPVFMFCEAITFSYPSTHPFILIWGNKKLKQTFLSVLWHVRYWVKGEKPSXP.

A topological domain (extracellular) is located at residue M1. Residues 2–22 form a helical membrane-spanning segment; it reads ITFLPIIFSILIVVTFVIGNF. Residues 23 to 46 lie on the Cytoplasmic side of the membrane; that stretch reads ANGFIALANSIEWFKRQKISFADQ. Residues 47–67 traverse the membrane as a helical segment; sequence ILTALAVSRVGLLWVLLLNWY. Topologically, residues 68–86 are extracellular; that stretch reads ATELNPAFYSIEVRITAYN. The helical transmembrane segment at 87–107 threads the bilayer; the sequence is LWAVINHFSNWLATSLSIFYL. At 108 to 126 the chain is on the cytoplasmic side; it reads LKIANFSNLIFLCLKRRVK. A helical membrane pass occupies residues 127–147; that stretch reads SVVLVILLGPLLFLVCHLFVI. At 148-178 the chain is on the extracellular side; sequence NMNQIIWTKEYEGNMTWKIKLRSAMYLSNTT. N-linked (GlcNAc...) asparagine glycosylation is found at N161 and N176. The helical transmembrane segment at 179 to 199 threads the bilayer; that stretch reads VTILANLVPFTLTLISFLLLI. The Cytoplasmic segment spans residues 200 to 229; it reads CSLCKHLEKMQLHGKGSQDPSMKVHIKALQ. A helical membrane pass occupies residues 230 to 250; sequence TVTSFLLLCAIYFLSIIMSVW. Residues 251-259 lie on the Extracellular side of the membrane; it reads SFESLENKP. A helical membrane pass occupies residues 260–280; sequence VFMFCEAITFSYPSTHPFILI. Residues 281-309 are Cytoplasmic-facing; the sequence is WGNKKLKQTFLSVLWHVRYWVKGEKPSXP.

It belongs to the G-protein coupled receptor T2R family.

The protein resides in the membrane. Its subcellular location is the cell projection. It is found in the cilium membrane. Receptor that may play a role in the perception of bitterness and is gustducin-linked. May play a role in sensing the chemical composition of the gastrointestinal content. The activity of this receptor may stimulate alpha gustducin, mediate PLC-beta-2 activation and lead to the gating of TRPM5. In airway epithelial cells, binding of bitter compounds increases the intracellular calcium ion concentration and stimulates ciliary beat frequency. This chain is Taste receptor type 2 member 46 (TAS2R46), found in Pan troglodytes (Chimpanzee).